The primary structure comprises 212 residues: Pyridoxine/pyridoxamine 5'-phosphate oxidase (212 aa).

Residues arginine 7–tyrosine 10 and lysine 65 each bind substrate. Residues arginine 60–lysine 65, phenylalanine 75–threonine 76, arginine 81, lysine 82, and glutamine 104 contribute to the FMN site. Substrate-binding residues include tyrosine 122, arginine 126, and serine 130. FMN is bound by residues glutamine 139–serine 140 and tryptophan 184. Arginine 190–histidine 192 is a binding site for substrate. Residue arginine 194 participates in FMN binding.

This sequence belongs to the pyridoxamine 5'-phosphate oxidase family. Homodimer. Requires FMN as cofactor.

The enzyme catalyses pyridoxamine 5'-phosphate + O2 + H2O = pyridoxal 5'-phosphate + H2O2 + NH4(+). It catalyses the reaction pyridoxine 5'-phosphate + O2 = pyridoxal 5'-phosphate + H2O2. It participates in cofactor metabolism; pyridoxal 5'-phosphate salvage; pyridoxal 5'-phosphate from pyridoxamine 5'-phosphate: step 1/1. The protein operates within cofactor metabolism; pyridoxal 5'-phosphate salvage; pyridoxal 5'-phosphate from pyridoxine 5'-phosphate: step 1/1. Its function is as follows. Catalyzes the oxidation of either pyridoxine 5'-phosphate (PNP) or pyridoxamine 5'-phosphate (PMP) into pyridoxal 5'-phosphate (PLP). In Pseudoalteromonas translucida (strain TAC 125), this protein is Pyridoxine/pyridoxamine 5'-phosphate oxidase.